The following is a 219-amino-acid chain: Elongation factor Ts (219 aa).

An involved in Mg(2+) ion dislocation from EF-Tu region spans residues 82–85; that stretch reads TDFV.

The protein belongs to the EF-Ts family.

It is found in the cytoplasm. Functionally, associates with the EF-Tu.GDP complex and induces the exchange of GDP to GTP. It remains bound to the aminoacyl-tRNA.EF-Tu.GTP complex up to the GTP hydrolysis stage on the ribosome. The chain is Elongation factor Ts from Anaeromyxobacter sp. (strain K).